Reading from the N-terminus, the 237-residue chain is ASEDGGRGPYVQADLAYAYEHITHDYPEPTAPNKNKISTVSDYFRNIRTRSVHPRVSVGYDFGGWRIAADYARYRKWNNNKYSVSIKELLRNKGNGNRTDLKAENQENGTFHAVSSLGLSAVYDFKLNDKFKPYIGARVAYGHVRHSIDSTKKTTEVTTILHGPGTTPTVYPGKNTQDAHRESDSIRRVGLGAVAGVGIDITPNLTLDAGYRYHYWGRLENTRFKTHEASLGVRYRF.

Ala1 is a signal peptide.

It belongs to the opacity porin family.

Its subcellular location is the cell outer membrane. Its function is as follows. Implicated in a number of adherence functions. OPA proteins are implicated in pathogenesis and are subject to phase variation. This Neisseria gonorrhoeae protein is Opacity protein opA57 (opaK).